The following is a 993-amino-acid chain: Mediator of RNA polymerase II transcription subunit 24 (993 aa).

Serine 827 and serine 829 each carry phosphoserine.

The protein belongs to the Mediator complex subunit 24 family. Component of the Mediator complex, which includes at least CDK8, MED4, MED6, MED11, MED14, MED17, MED18, MED20, MED21, MED22, MED27, MED28, MED30 and MED31.

It localises to the nucleus. Its function is as follows. Component of the Mediator complex, a coactivator involved in the regulated transcription of nearly all RNA polymerase II-dependent genes. Mediator functions as a bridge to convey information from gene-specific regulatory proteins to the basal RNA polymerase II transcription machinery. Mediator is recruited to promoters by direct interactions with regulatory proteins and serves as a scaffold for the assembly of a functional preinitiation complex with RNA polymerase II and the general transcription factors. Required for activated transcription of the MtnA, MtnB and MtnD genes. This chain is Mediator of RNA polymerase II transcription subunit 24 (MED24), found in Drosophila melanogaster (Fruit fly).